Here is a 623-residue protein sequence, read N- to C-terminus: Glutathione import ATP-binding protein GsiA (623 aa).

2 ABC transporter domains span residues 15 to 269 (VENL…RALL) and 314 to 564 (LRVR…RKLL). Residues 49 to 56 (GESGSGKS) and 357 to 364 (GESGSGKS) contribute to the ATP site.

This sequence belongs to the ABC transporter superfamily. Glutathione importer (TC 3.A.1.5.11) family. In terms of assembly, the complex is composed of two ATP-binding proteins (GsiA), two transmembrane proteins (GsiC and GsiD) and a solute-binding protein (GsiB).

It localises to the cell inner membrane. The catalysed reaction is glutathione(out) + ATP + H2O = glutathione(in) + ADP + phosphate + H(+). With respect to regulation, inhibited by verapamil but not by carbonyl cyanide m-chlorophenylhydrazone (CCCP). Functionally, part of the ABC transporter complex GsiABCD involved in glutathione import. Responsible for energy coupling to the transport system. In Escherichia coli (strain K12), this protein is Glutathione import ATP-binding protein GsiA.